Here is a 245-residue protein sequence, read N- to C-terminus: tRNA (guanine-N(1)-)-methyltransferase (245 aa).

S-adenosyl-L-methionine contacts are provided by residues Gly-111 and 131 to 136 (MGDYVL).

This sequence belongs to the RNA methyltransferase TrmD family. Homodimer.

The protein localises to the cytoplasm. The catalysed reaction is guanosine(37) in tRNA + S-adenosyl-L-methionine = N(1)-methylguanosine(37) in tRNA + S-adenosyl-L-homocysteine + H(+). Its function is as follows. Specifically methylates guanosine-37 in various tRNAs. The chain is tRNA (guanine-N(1)-)-methyltransferase from Staphylococcus aureus (strain MRSA252).